The primary structure comprises 143 residues: Transcriptional regulator MraZ (143 aa).

2 SpoVT-AbrB domains span residues 5-47 (TYTP…PREE) and 76-119 (TDEQ…DAQA).

The protein belongs to the MraZ family. As to quaternary structure, forms oligomers.

The protein localises to the cytoplasm. It is found in the nucleoid. The polypeptide is Transcriptional regulator MraZ (Rhodococcus opacus (strain B4)).